A 3258-amino-acid chain; its full sequence is Protein unc-80 homolog (3258 aa).

Residues 152–173 (VENQGSPGQPCQSSSNDEEENN) form a disordered region. The span at 155–166 (QGSPGQPCQSSS) shows a compositional bias: low complexity. Serine 257 is modified (phosphoserine). Disordered stretches follow at residues 291–316 (RGNS…RASL), 449–468 (RKED…GKRR), 522–560 (RRGS…HGEN), 697–717 (KKSE…GAFQ), 732–784 (PAVS…TPVS), 963–1019 (PGKK…EQMQ), 1034–1076 (KSQS…ISLR), 1404–1447 (EDSK…MSNA), and 1817–1836 (AVSA…HHVP). Residues 295–307 (FDGSLSSQTSQER) show a composition bias toward polar residues. Serine 525 bears the Phosphoserine mark. The segment covering 698–712 (KSENKENETLEKRPS) has biased composition (basic and acidic residues). Gly residues predominate over residues 732–767 (PAVSGAGDGGGEEGGGGDGGGGGGDGGGGGGGGGGP). Composition is skewed to basic and acidic residues over residues 769–780 (EKNDKNQEKDES) and 965–974 (KKVEENEQES). Residues 1035–1052 (SQSAASDTSSQSEQDTSE) are compositionally biased toward low complexity. A compositionally biased stretch (basic residues) spans 1066–1076 (ARSRSRRISLR). A compositionally biased stretch (basic and acidic residues) spans 1417-1429 (LKSDAGVEEKKEG). 4 helical membrane passes run 2268-2288 (PFVL…DAAN), 2398-2418 (IAAT…VEVL), 2785-2805 (GLAE…LVCF), and 2831-2851 (LALW…FVLL). Positions 2942–2964 (NTGTGTVWEQDSEPSQQASQDTL) are enriched in polar residues. Residues 2942-2982 (NTGTGTVWEQDSEPSQQASQDTLSRTDEEDEENDSISMPSV) form a disordered region. Serine 3042 is subject to Phosphoserine. A disordered region spans residues 3051–3213 (NLLVQQPLGR…DDFTGLETSS (163 aa)). Residues 3059-3068 (GRKRGLRQLR) are compositionally biased toward basic residues. Polar residues predominate over residues 3088–3100 (RLSTTRRSIQPKT). The span at 3117–3129 (PEPAAAPTDALPA) shows a compositional bias: low complexity. Residues 3175 to 3186 (PTEEGEKEEDTE) are compositionally biased toward acidic residues.

Belongs to the unc-80 family. NALCN complex consists of NALCN and auxiliary subunits, UNC79, UNC80 and NACL1. These auxiliary subunits are essential for the NALCN complex function. Interacts (via N-terminus half) with NALCN; this interaction facilitates NALCN surface localization. Interacts with UNC79. UNC80 bridges NALCN to UNC79. In terms of processing, phosphorylated on tyrosine residues. Moderately expressed in fetal brain, spinal cord, skeletal muscle, thymus, spleen, fetal liver, small intestine, colon, kidney and uterus. Highly expressed in adrenal gland, prostate and testis, as well as in brain and cerebellum.

It is found in the cell membrane. Auxiliary subunit of the NALCN sodium channel complex, a voltage-gated ion channel responsible for the resting Na(+) permeability that controls neuronal excitability. Activated by neuropeptides substance P, neurotensin, and extracellular Ca(2+) that regulates neuronal excitability by controlling the sizes of NALCN-dependent sodium-leak current. UNC80 is essential for NALCN sensitivity to extracellular Ca(2+). In Homo sapiens (Human), this protein is Protein unc-80 homolog.